A 174-amino-acid chain; its full sequence is Gamma-crystallin A (174 aa).

2 Beta/gamma crystallin 'Greek key' domains span residues 2 to 40 (GKITFYEDRDFQGRCYNCISDCPNLRVYFSRCNSIRVDS) and 41 to 83 (GCWM…RIIP). The interval 84–87 (HTSS) is connecting peptide. 2 consecutive Beta/gamma crystallin 'Greek key' domains span residues 88–128 (HKLR…HVLE) and 129–171 (GCWV…RRVT).

It belongs to the beta/gamma-crystallin family. As to quaternary structure, monomer.

Its function is as follows. Crystallins are the dominant structural components of the vertebrate eye lens. This Homo sapiens (Human) protein is Gamma-crystallin A (CRYGA).